Consider the following 543-residue polypeptide: Excitatory amino acid transporter 1 (543 aa).

The Cytoplasmic portion of the chain corresponds to 1-47 (MTKSNGEDPRAGSRMERFQQGVRQRTLLAKKKVQNITKDDVKGFLKR). The helical transmembrane segment at 48 to 68 (NGFVLFTVIAVVVGSILGFSV) threads the bilayer. At 69–86 (RSYHMTFRELKYFSFPGE) the chain is on the extracellular side. The helical transmembrane segment at 87–108 (LLMRMLQMLVLPLIVSSLVTGM) threads the bilayer. Residues 109 to 122 (AALDSKASGKMGLR) lie on the Cytoplasmic side of the membrane. The helical transmembrane segment at 123–145 (AVVYYMTTTVIAVFIGIVIVIIV) threads the bilayer. Topologically, residues 146 to 237 (HPGKGTKEHM…MREEMIPVPG (92 aa)) are extracellular. 2 N-linked (GlcNAc...) asparagine glycosylation sites follow: asparagine 206 and asparagine 217. Residues 238-261 (AVNGVNALGLVVFSMCFGLVIGNM) form a helical membrane-spanning segment. Over 262–270 (KEQGKALKD) the chain is Cytoplasmic. Residues 271–298 (FFDSLNEAIMRLVAVIMWYAPIGILFLI) form a helical membrane-spanning segment. Over 299–319 (AGKIAEMEDMGVVGGQLGMYT) the chain is Extracellular. Residues 320–341 (VTVIIGLLIHAVIVLPLLYFAV) form a helical membrane-spanning segment. Topologically, residues 342–346 (TRKNP) are cytoplasmic. The segment at residues 347–377 (WVFIGGILQALITALGTSSSSATLPITFKCL) is an intramembrane region (discontinuously helical). 364-366 (SSS) serves as a coordination point for L-aspartate. Topologically, residues 378 to 386 (EENNKVDKR) are cytoplasmic. The helical transmembrane segment at 387–413 (VTRFVLPVGATINMDGTALYEALAAIF) threads the bilayer. Na(+) is bound by residues glycine 395, threonine 397, and asparagine 399. An L-aspartate-binding site is contributed by threonine 403. Residues 414 to 426 (IAQVNNYDLNFGQ) lie on the Extracellular side of the membrane. The segment at residues 427-460 (ILTISITATAASIGAAGIPQAGLVTMVIVLTSVG) is an intramembrane region (discontinuously helical). Position 444 to 448 (444 to 448 (IPQAG)) interacts with L-aspartate. Topologically, residues 461–473 (LPTDDITLIIAVD) are extracellular. Residues 474-495 (WFLDRLRTTTNVLGDSLGAGIV) traverse the membrane as a helical segment. L-aspartate-binding residues include aspartate 477 and asparagine 484. Na(+) contacts are provided by asparagine 484 and aspartate 488. The Cytoplasmic segment spans residues 496-543 (EHLSRHELQSGDAEMGNSVIEENEMKKPYQLVSQENELEKPIDSETKM). The disordered stretch occupies residues 521–543 (KKPYQLVSQENELEKPIDSETKM). Residues 532-543 (ELEKPIDSETKM) show a composition bias toward basic and acidic residues.

Belongs to the dicarboxylate/amino acid:cation symporter (DAACS) (TC 2.A.23) family. In terms of assembly, homotrimer. In terms of tissue distribution, detected in retina (at protein level).

The protein localises to the cell membrane. The enzyme catalyses K(+)(in) + L-glutamate(out) + 3 Na(+)(out) + H(+)(out) = K(+)(out) + L-glutamate(in) + 3 Na(+)(in) + H(+)(in). The catalysed reaction is K(+)(in) + L-aspartate(out) + 3 Na(+)(out) + H(+)(out) = K(+)(out) + L-aspartate(in) + 3 Na(+)(in) + H(+)(in). It catalyses the reaction D-aspartate(out) + K(+)(in) + 3 Na(+)(out) + H(+)(out) = D-aspartate(in) + K(+)(out) + 3 Na(+)(in) + H(+)(in). Its function is as follows. Sodium-dependent, high-affinity amino acid transporter that mediates the uptake of L-glutamate and also L-aspartate and D-aspartate. Functions as a symporter that transports one amino acid molecule together with two or three Na(+) ions and one proton, in parallel with the counter-transport of one K(+) ion. Plays a redundant role in the rapid removal of released glutamate from the synaptic cleft, which is essential for terminating the postsynaptic action of glutamate. This is Excitatory amino acid transporter 1 (SLC1A3) from Ambystoma tigrinum (Eastern tiger salamander).